Here is a 626-residue protein sequence, read N- to C-terminus: Putative ankyrin repeat protein L768 (626 aa).

ANK repeat units follow at residues Asn217 to Phe246, Asp333 to Lys362, Thr421 to Ile451, Ser515 to Tyr545, and Gln547 to Pro571.

The sequence is that of Putative ankyrin repeat protein L768 from Acanthamoeba polyphaga mimivirus (APMV).